A 92-amino-acid polypeptide reads, in one-letter code: Bombyxin A-5 (92 aa).

An N-terminal signal peptide occupies residues 1–19 (MKLLLAIALMLTTVMWAST). Q20 is subject to Pyrrolidone carboxylic acid. 3 disulfides stabilise this stretch: C29–C79, C41–C92, and C78–C83. Positions 50 to 71 (SDAQFASYGSAWLMPYSEGRDQ) are cleaved as a propeptide — c peptide like.

Belongs to the insulin family. In terms of assembly, heterodimer of a B chain and an A chain linked by two disulfide bonds.

It is found in the secreted. Brain peptide responsible for activation of prothoracic glands to produce ecdysone in insects. This Bombyx mori (Silk moth) protein is Bombyxin A-5 (BBXA5).